Consider the following 152-residue polypeptide: Small ribosomal subunit protein uS13 (152 aa).

S41 bears the Phosphoserine mark.

The protein belongs to the universal ribosomal protein uS13 family.

The protein localises to the cytoplasm. In terms of biological role, located at the top of the head of the 40S subunit, it contacts several helices of the 18S rRNA. In Drosophila melanogaster (Fruit fly), this protein is Small ribosomal subunit protein uS13 (RpS18).